Consider the following 143-residue polypeptide: Nucleoside diphosphate kinase (143 aa).

Residues Lys-11, Phe-59, Arg-87, Thr-93, Arg-104, and Asn-114 each coordinate ATP. The Pros-phosphohistidine intermediate role is filled by His-117.

It belongs to the NDK family. In terms of assembly, homotetramer. Mg(2+) serves as cofactor.

It localises to the cytoplasm. The enzyme catalyses a 2'-deoxyribonucleoside 5'-diphosphate + ATP = a 2'-deoxyribonucleoside 5'-triphosphate + ADP. The catalysed reaction is a ribonucleoside 5'-diphosphate + ATP = a ribonucleoside 5'-triphosphate + ADP. Major role in the synthesis of nucleoside triphosphates other than ATP. The ATP gamma phosphate is transferred to the NDP beta phosphate via a ping-pong mechanism, using a phosphorylated active-site intermediate. The polypeptide is Nucleoside diphosphate kinase (Shewanella sediminis (strain HAW-EB3)).